Consider the following 281-residue polypeptide: Bifunctional protein FolD (281 aa).

NADP(+)-binding positions include 159–161 (NRS), Ser184, and Ile225.

This sequence belongs to the tetrahydrofolate dehydrogenase/cyclohydrolase family. As to quaternary structure, homodimer.

The enzyme catalyses (6R)-5,10-methylene-5,6,7,8-tetrahydrofolate + NADP(+) = (6R)-5,10-methenyltetrahydrofolate + NADPH. It carries out the reaction (6R)-5,10-methenyltetrahydrofolate + H2O = (6R)-10-formyltetrahydrofolate + H(+). It functions in the pathway one-carbon metabolism; tetrahydrofolate interconversion. In terms of biological role, catalyzes the oxidation of 5,10-methylenetetrahydrofolate to 5,10-methenyltetrahydrofolate and then the hydrolysis of 5,10-methenyltetrahydrofolate to 10-formyltetrahydrofolate. The polypeptide is Bifunctional protein FolD (Thermoplasma volcanium (strain ATCC 51530 / DSM 4299 / JCM 9571 / NBRC 15438 / GSS1)).